A 495-amino-acid polypeptide reads, in one-letter code: MFLQIVTSVLATGLLYALISVLQQNRTLSASLPPGPPGHWLFGNAPPRAFPYRHFAELTETYGPVFTLRFGRRIVCVIGRYQAAVDILMKHSAETSDRPRSVAANEIMSKGHRVLMTPAGERLKKYRRALHAFLQPSSSATYKPMQYKNAKNYVLDCLHDGRHHLYHGRKYAASVVMSVAYGKTTPTSYSDPEVLQINKSLARLGAALKPGAYLVDTYPILKYCPGYASHLRRYREEELALITKQANAVRELLAKGEAPPSFTAYLIENQERLGISDDELAYLSGAIFGAGSDTTAAALGIMTMAAACYPEAQARVQAQLDEVVGRDRAPTFEDEDLLPEVTAFVLEAYRWRPVSAGGFSHRATKDVVWNGYVIPAGAEIIGNHWAISRDPEVYPNPEDFKPARWLNEHGRIRNDLKFINFGFGRRVCVGQHVADQSLFINTALVLWAFRISQDAQCPIDTYAFTDTANVHPLPFSLHFEPRVKDMEAMLGAQAE.

A helical transmembrane segment spans residues 2–22 (FLQIVTSVLATGLLYALISVL). N-linked (GlcNAc...) asparagine glycans are attached at residues N25 and N198. C428 lines the heme pocket.

This sequence belongs to the cytochrome P450 family. Heme is required as a cofactor.

It localises to the membrane. It functions in the pathway secondary metabolite biosynthesis. Functionally, cytochrome P450 monooxygenase that is able to use 4-ethoxybenzoic acid as a substrate for oxidation. The chain is Cytochrome P450 monooxygenase 64 from Postia placenta (strain ATCC 44394 / Madison 698-R) (Brown rot fungus).